A 619-amino-acid chain; its full sequence is DNA mismatch repair protein MutL (619 aa).

Positions 358 to 401 are disordered; sequence GGNQFARPSEAREAATRFSITSSREPAASGGSSGGASWPHAQPG.

Belongs to the DNA mismatch repair MutL/HexB family.

Its function is as follows. This protein is involved in the repair of mismatches in DNA. It is required for dam-dependent methyl-directed DNA mismatch repair. May act as a 'molecular matchmaker', a protein that promotes the formation of a stable complex between two or more DNA-binding proteins in an ATP-dependent manner without itself being part of a final effector complex. The sequence is that of DNA mismatch repair protein MutL from Klebsiella pneumoniae (strain 342).